The sequence spans 566 residues: Phenylalanine--tRNA ligase beta subunit (566 aa).

Residues 287 to 362 (YFQEEVEFNV…IGEGLSSFNP (76 aa)) form the B5 domain. 4 residues coordinate Mg(2+): Asp-340, Asp-346, Glu-349, and Asp-350.

This sequence belongs to the phenylalanyl-tRNA synthetase beta subunit family. Type 2 subfamily. As to quaternary structure, tetramer of two alpha and two beta subunits. Mg(2+) is required as a cofactor.

The protein localises to the cytoplasm. It carries out the reaction tRNA(Phe) + L-phenylalanine + ATP = L-phenylalanyl-tRNA(Phe) + AMP + diphosphate + H(+). The sequence is that of Phenylalanine--tRNA ligase beta subunit from Borreliella burgdorferi (strain ATCC 35210 / DSM 4680 / CIP 102532 / B31) (Borrelia burgdorferi).